A 331-amino-acid polypeptide reads, in one-letter code: Probable allantoicase (331 aa).

Belongs to the allantoicase family.

The enzyme catalyses allantoate + H2O = (S)-ureidoglycolate + urea. Its pathway is nitrogen metabolism; (S)-allantoin degradation; (S)-ureidoglycolate from allantoate (aminidohydrolase route): step 1/1. The protein is Probable allantoicase of Pseudomonas syringae pv. syringae (strain B728a).